The chain runs to 435 residues: Envelope glycoprotein M (435 aa).

The Intravirion portion of the chain corresponds to 1–36 (MGTQKKGPRSEKVSPYDTTTPEVEALDHQMDTLNWR). A helical membrane pass occupies residues 37-57 (IWIIQVMMFTLGAVMLLATLI). Topologically, residues 58–111 (AASSEYTGIPCFYAAVVDYELFNATLDGGVWSGNRGGYSAPVLFLEPHSVVAFT) are virion surface. A helical transmembrane segment spans residues 112-132 (YYTALTAMAMAVYTLITAAII). At 133 to 155 (HRETKNQRVRQSSGVAWLVVDPT) the chain is on the intravirion side. A helical membrane pass occupies residues 156-176 (TLFWGLLSLWLLNAVVLLLAY). At 177–178 (KQ) the chain is on the virion surface side. The helical transmembrane segment at 179–199 (IGVAATLYLGHFATSVIFTTY) threads the bilayer. Topologically, residues 200–233 (FCGRGKLDETNIKAVANLRQQSVFLYRLAGPTRA) are intravirion. The chain crosses the membrane as a helical span at residues 234–254 (VFVNLMAALMAICILFVSLML). At 255 to 265 (ELVVANHLHTG) the chain is on the virion surface side. The helical transmembrane segment at 266 to 288 (LWSSVSVAMSTFSTLSVVYLIVS) threads the bilayer. At 289 to 294 (ELILAH) the chain is on the intravirion side. Residues 295 to 317 (YIHVLIGPSLGTLVACATLGTAA) traverse the membrane as a helical segment. Residues 318 to 334 (HSYMDRLYDPISVQSPR) are Virion surface-facing. Residues 335–355 (LIPTTRGTLACLAVFSVVMLL) traverse the membrane as a helical segment. The Intravirion segment spans residues 356–435 (LRLMRAYVYH…LYERSNSGWE (80 aa)).

It belongs to the herpesviridae glycoprotein M family. Interacts (via N-terminus) with gN (via N-terminus). The gM-gN heterodimer forms the gCII complex.

It localises to the virion membrane. Its subcellular location is the host Golgi apparatus. The protein resides in the host trans-Golgi network. It is found in the host endosome membrane. The protein localises to the host nucleus inner membrane. Envelope glycoprotein important for virion assembly and egress. Plays a role in the correct incorporation of gH-gL into virion membrane. Directs the glycoprotein N (gN) to the host trans-Golgi network. The protein is Envelope glycoprotein M of Homo sapiens (Human).